A 395-amino-acid polypeptide reads, in one-letter code: Chaperone protein DnaJ 2 (395 aa).

The region spanning 10-75 is the J domain; that stretch reads NYYADLGVSS…KKRKEYDELK (66 aa). The CR-type zinc-finger motif lies at 165–242; that stretch reads GTTIPVELTG…CHGRGTVRKS (78 aa). Residues Cys-178, Cys-181, Cys-194, Cys-197, Cys-216, Cys-219, Cys-230, and Cys-233 each coordinate Zn(2+). 4 CXXCXGXG motif repeats span residues 178 to 185, 194 to 201, 216 to 223, and 230 to 237; these read CNTCHGSG, CGTCDGTG, CATCGGTG, and CDNCHGRG.

The protein belongs to the DnaJ family. Homodimer. Zn(2+) is required as a cofactor.

Its subcellular location is the cytoplasm. Participates actively in the response to hyperosmotic and heat shock by preventing the aggregation of stress-denatured proteins and by disaggregating proteins, also in an autonomous, DnaK-independent fashion. Unfolded proteins bind initially to DnaJ; upon interaction with the DnaJ-bound protein, DnaK hydrolyzes its bound ATP, resulting in the formation of a stable complex. GrpE releases ADP from DnaK; ATP binding to DnaK triggers the release of the substrate protein, thus completing the reaction cycle. Several rounds of ATP-dependent interactions between DnaJ, DnaK and GrpE are required for fully efficient folding. Also involved, together with DnaK and GrpE, in the DNA replication of plasmids through activation of initiation proteins. The protein is Chaperone protein DnaJ 2 of Corynebacterium glutamicum (strain ATCC 13032 / DSM 20300 / JCM 1318 / BCRC 11384 / CCUG 27702 / LMG 3730 / NBRC 12168 / NCIMB 10025 / NRRL B-2784 / 534).